Reading from the N-terminus, the 503-residue chain is NAD(P)H-quinone oxidoreductase chain 4, chloroplastic (503 aa).

14 helical membrane-spanning segments follow: residues 3 to 23, 37 to 57, 84 to 104, 113 to 130, 134 to 154, 167 to 187, 208 to 228, 242 to 262, 274 to 294, 305 to 325, 330 to 350, 385 to 405, 416 to 436, and 462 to 482; these read FFPWLTIIVVFPIFAGSIVFF, LCICILELLITTYTFCFHFQV, GLSVGPILLTGFITTLATLAA, LFHFLMLAMYSGQIGLFA, LFLFFIMWELELIPVYLLLSM, FILYTAGGSIFLLMGVLGLTL, ALEIIFYIGFFIAFAVKSPIL, HYSTCMLLAGILLKMGAYGLI, SLFSPYLVIVGTIQMIYAALT, IAYSSVSHMGFIIIGIGSMTD, GALLQIISHGFIGAALFFLAG, SLALPGMSGFVAELLVFFGII, ILISFVMAIGIILTPIYSLSM, and LFLSISILLPVIGIGMYPDFV.

This sequence belongs to the complex I subunit 4 family.

It is found in the plastid. Its subcellular location is the chloroplast thylakoid membrane. The catalysed reaction is a plastoquinone + NADH + (n+1) H(+)(in) = a plastoquinol + NAD(+) + n H(+)(out). The enzyme catalyses a plastoquinone + NADPH + (n+1) H(+)(in) = a plastoquinol + NADP(+) + n H(+)(out). The sequence is that of NAD(P)H-quinone oxidoreductase chain 4, chloroplastic from Ipomoea purpurea (Common morning glory).